The primary structure comprises 346 residues: N(4)-(beta-N-acetylglucosaminyl)-L-asparaginase (346 aa).

A signal peptide spans 1–23 (MERKSNLSLLLLLLVLGMPLVRG). A glycan (N-linked (GlcNAc...) asparagine) is linked at N38. Disulfide bonds link C64-C69 and C163-C179. T206 functions as the Nucleophile in the catalytic mechanism. Residues 234 to 237 (RVGD) and 257 to 260 (TGDG) contribute to the substrate site. A disulfide bond links C286 and C306. An N-linked (GlcNAc...) asparagine glycan is attached at N310. C317 and C345 are disulfide-bonded.

The protein belongs to the Ntn-hydrolase family. Heterotetramer of two alpha and two beta chains arranged as a dimer of alpha/beta heterodimers. Cleaved into an alpha and beta chain by autocatalysis; this activates the enzyme. The N-terminal residue of the beta subunit is responsible for the nucleophile hydrolase activity. In terms of processing, N-glycosylated.

Its subcellular location is the lysosome. It catalyses the reaction N(4)-(beta-N-acetyl-D-glucosaminyl)-L-asparagine + H2O = N-acetyl-beta-D-glucosaminylamine + L-aspartate + H(+). In terms of biological role, cleaves the GlcNAc-Asn bond which joins oligosaccharides to the peptide of asparagine-linked glycoproteins. This chain is N(4)-(beta-N-acetylglucosaminyl)-L-asparaginase (Aga), found in Mus musculus (Mouse).